Here is a 173-residue protein sequence, read N- to C-terminus: Protein-export protein SecB 1 (173 aa).

The protein belongs to the SecB family. In terms of assembly, homotetramer, a dimer of dimers. One homotetramer interacts with 1 SecA dimer.

The protein localises to the cytoplasm. One of the proteins required for the normal export of preproteins out of the cell cytoplasm. It is a molecular chaperone that binds to a subset of precursor proteins, maintaining them in a translocation-competent state. It also specifically binds to its receptor SecA. The sequence is that of Protein-export protein SecB 1 from Gluconobacter oxydans (strain 621H) (Gluconobacter suboxydans).